Consider the following 219-residue polypeptide: Large ribosomal subunit protein uL4 (219 aa).

A disordered region spans residues 43–101; it reads AAARQGTHKTKRRGEVRGGGKKPYRQKGTGRARQGSTRAPQFAGGGVVHGPQPRDYSQR. Over residues 61–72 the composition is skewed to basic residues; it reads GGKKPYRQKGTG.

The protein belongs to the universal ribosomal protein uL4 family. Part of the 50S ribosomal subunit.

Functionally, one of the primary rRNA binding proteins, this protein initially binds near the 5'-end of the 23S rRNA. It is important during the early stages of 50S assembly. It makes multiple contacts with different domains of the 23S rRNA in the assembled 50S subunit and ribosome. Its function is as follows. Forms part of the polypeptide exit tunnel. This is Large ribosomal subunit protein uL4 from Streptomyces coelicolor (strain ATCC BAA-471 / A3(2) / M145).